The primary structure comprises 115 residues: MSLDMQEWREETTAIVNELLADGSNPDLEYEIEHHFACQDFDLLEKAAVDLFKAGFEVTDAEEMELDDGATIFCFDATTECKLDIETIVADIAKMLPILEKYGVDYDGWGTYFQE.

The protein belongs to the RraB family. As to quaternary structure, interacts with the C-terminal region of Rne.

It is found in the cytoplasm. Its function is as follows. Globally modulates RNA abundance by binding to RNase E (Rne) and regulating its endonucleolytic activity. Can modulate Rne action in a substrate-dependent manner by altering the composition of the degradosome. The chain is Regulator of ribonuclease activity B from Aeromonas hydrophila subsp. hydrophila (strain ATCC 7966 / DSM 30187 / BCRC 13018 / CCUG 14551 / JCM 1027 / KCTC 2358 / NCIMB 9240 / NCTC 8049).